A 295-amino-acid polypeptide reads, in one-letter code: Craniofacial development protein 1 (295 aa).

2 stretches are compositionally biased toward acidic residues: residues 1 to 18 and 25 to 43; these read MEEFDSEDFSTSDEDEDY and YSEDDVNELVKEDEVDGEE. 2 disordered regions span residues 1 to 153 and 188 to 217; these read MEEF…LDKP and FLKQTEREKPQALVTSPATPLPAGSGIKRA. Positions 49–65 are enriched in basic residues; that stretch reads KGKRRKAQGIPARKRKQ. Residues Ser-80, Ser-83, Ser-84, and Ser-112 each carry the phosphoserine modification. Lys-146 is covalently cross-linked (Glycyl lysine isopeptide (Lys-Gly) (interchain with G-Cter in SUMO2)). Positions 174–213 are hydrophilic; sequence VTKEVDAASKEAKSFLKQTEREKPQALVTSPATPLPAGSG. Residues 188–197 show a composition bias toward basic and acidic residues; sequence FLKQTEREKP. Ser-212 carries the post-translational modification Phosphoserine. The region spanning 214–295 is the BCNT-C domain; the sequence is IKRASGMSSL…RDLRLSKMKP (82 aa). An N6-methyllysine modification is found at Lys-215. Ser-246 bears the Phosphoserine mark.

As to expression, expressed in lung, liver and heart, with higher expression in teeth.

It localises to the chromosome. It is found in the centromere. The protein localises to the kinetochore. In terms of biological role, may play a role during embryogenesis. May modulate tooth organogenesis since alterations of this protein function affect tooth organs size as well as individual cell fate and survival. In embryonic cells, blockage of the function results in increased number of apoptotic cells, reduced proliferation, alterations in cell shape and fibronection matrix synthesis. This is Craniofacial development protein 1 (Cfdp1) from Mus musculus (Mouse).